Consider the following 134-residue polypeptide: Cilia- and flagella-associated protein 144 (134 aa).

The interval 76-95 (QGPRKKYPETQTENQEVGWD) is disordered.

The protein belongs to the CFAP144 family. Microtubule inner protein component of sperm flagellar doublet microtubules.

Its subcellular location is the cytoplasm. It localises to the cytoskeleton. The protein resides in the cilium axoneme. The protein localises to the flagellum axoneme. Microtubule inner protein (MIP) part of the dynein-decorated doublet microtubules (DMTs) in cilia axoneme, which is required for motile cilia beating. The protein is Cilia- and flagella-associated protein 144 of Homo sapiens (Human).